The sequence spans 226 residues: Leucyl/phenylalanyl-tRNA--protein transferase (226 aa).

It belongs to the L/F-transferase family.

The protein localises to the cytoplasm. The catalysed reaction is N-terminal L-lysyl-[protein] + L-leucyl-tRNA(Leu) = N-terminal L-leucyl-L-lysyl-[protein] + tRNA(Leu) + H(+). It carries out the reaction N-terminal L-arginyl-[protein] + L-leucyl-tRNA(Leu) = N-terminal L-leucyl-L-arginyl-[protein] + tRNA(Leu) + H(+). It catalyses the reaction L-phenylalanyl-tRNA(Phe) + an N-terminal L-alpha-aminoacyl-[protein] = an N-terminal L-phenylalanyl-L-alpha-aminoacyl-[protein] + tRNA(Phe). Functions in the N-end rule pathway of protein degradation where it conjugates Leu, Phe and, less efficiently, Met from aminoacyl-tRNAs to the N-termini of proteins containing an N-terminal arginine or lysine. The sequence is that of Leucyl/phenylalanyl-tRNA--protein transferase from Pseudomonas putida (strain ATCC 47054 / DSM 6125 / CFBP 8728 / NCIMB 11950 / KT2440).